Reading from the N-terminus, the 120-residue chain is Large ribosomal subunit protein bL12 (120 aa).

This sequence belongs to the bacterial ribosomal protein bL12 family. In terms of assembly, homodimer. Part of the ribosomal stalk of the 50S ribosomal subunit. Forms a multimeric L10(L12)X complex, where L10 forms an elongated spine to which 2 to 4 L12 dimers bind in a sequential fashion. Binds GTP-bound translation factors.

Forms part of the ribosomal stalk which helps the ribosome interact with GTP-bound translation factors. Is thus essential for accurate translation. This Listeria monocytogenes serovar 1/2a (strain ATCC BAA-679 / EGD-e) protein is Large ribosomal subunit protein bL12.